The chain runs to 313 residues: WD repeat-containing protein 82 (313 aa).

6 WD repeats span residues 19–58 (ENSD…PKRT), 105–144 (GHSK…CQGL), 146–184 (HLQG…KGPF), 192–231 (DRTC…VMHT), 236–276 (NNSK…KVAV), and 280–313 (KHTG…TIDD).

It belongs to the WD repeat SWD2 family. Component of the SET1/COMPASS complex. Component of the PNUTS-PP1 phosphatase complex.

It is found in the nucleus. Its subcellular location is the chromosome. The protein resides in the cytoplasm. Regulatory component of the SET1/COMPASS complex implicated in the tethering of this complex to transcriptional start sites of active genes. Facilitates histone H3 'Lys-4' methylation (H3K4me) via recruitment of the SETD1A or SETD1B to the 'Ser-5' phosphorylated C-terminal domain (CTD) of RNA polymerase II large subunit (POLR2A). Component of the PNUTS-PP1 protein phosphatase complex, a protein phosphatase 1 (PP1) complex that promotes RNA polymerase II transcription pause-release, allowing transcription elongation. This chain is WD repeat-containing protein 82 (wdr82), found in Xenopus tropicalis (Western clawed frog).